Consider the following 217-residue polypeptide: 3,4-dihydroxy-2-butanone 4-phosphate synthase (217 aa).

D-ribulose 5-phosphate-binding positions include 37–38 (RE), D42, 150–154 (RGGHT), and E174. Residue E38 coordinates Mg(2+). H153 serves as a coordination point for Mg(2+).

Belongs to the DHBP synthase family. In terms of assembly, homodimer. Mg(2+) serves as cofactor. Requires Mn(2+) as cofactor.

It catalyses the reaction D-ribulose 5-phosphate = (2S)-2-hydroxy-3-oxobutyl phosphate + formate + H(+). It functions in the pathway cofactor biosynthesis; riboflavin biosynthesis; 2-hydroxy-3-oxobutyl phosphate from D-ribulose 5-phosphate: step 1/1. Functionally, catalyzes the conversion of D-ribulose 5-phosphate to formate and 3,4-dihydroxy-2-butanone 4-phosphate. This is 3,4-dihydroxy-2-butanone 4-phosphate synthase from Sodalis glossinidius (strain morsitans).